We begin with the raw amino-acid sequence, 412 residues long: FAD-dependent monooxygenase nscC (412 aa).

The N-terminal stretch at 1 to 21 (MGKPQETILIIGAGIAGLTAS) is a signal peptide. Residues E35 and A46 each coordinate FAD. N-linked (GlcNAc...) asparagine glycosylation is found at N68 and N92. R119 contacts FAD. Residues N170, N231, and N251 are each glycosylated (N-linked (GlcNAc...) asparagine). Positions 326 and 339 each coordinate FAD.

The protein belongs to the paxM FAD-dependent monooxygenase family. Requires FAD as cofactor.

The protein operates within secondary metabolite biosynthesis. In terms of biological role, FAD-dependent monooxygenase; part of the gene cluster that mediates the biosynthesis of neosartoricin B, a prenylated anthracenone that probably exhibits T-cell antiproliferative activity, suggestive of a physiological role as an immunosuppressive agent. The non-reducing polyketide synthase nscA probably synthesizes and cyclizes the decaketide backbone. The hydrolase nscB then mediates the product release through hydrolysis followed by spontaneous decarboxylation. The prenyltransferase nscD catalyzes the addition of the dimethylallyl group to the aromatic C5. The FAD-dependent monooxygenase nscC is then responsible for the stereospecific hydroxylation at C2. Neosartoricin B can be converted into two additional compounds neosartoricins C and D. Neosartoricin C is a spirocyclic compound that is cyclized through the attack of C3 hydroxyl on C14, followed by dehydration. On the other hand, neosartoricin D is a further cyclized compound in which attack of C2 on C14 in neosartoricin C results in the formation of the acetal-containing dioxabicyclo-octanone ring. Both of these compounds are novel and possibly represent related metabolites of the gene cluster. The protein is FAD-dependent monooxygenase nscC of Trichophyton rubrum (strain ATCC MYA-4607 / CBS 118892) (Athlete's foot fungus).